Reading from the N-terminus, the 105-residue chain is Small ribosomal subunit protein uS10 (105 aa).

The protein belongs to the universal ribosomal protein uS10 family. As to quaternary structure, part of the 30S ribosomal subunit.

In terms of biological role, involved in the binding of tRNA to the ribosomes. This Trichormus variabilis (strain ATCC 29413 / PCC 7937) (Anabaena variabilis) protein is Small ribosomal subunit protein uS10.